A 319-amino-acid polypeptide reads, in one-letter code: ATP-dependent 6-phosphofructokinase 1 (319 aa).

Gly11 provides a ligand contact to ATP. ADP is bound at residue 21–25 (RAVTR). ATP-binding positions include 72-73 (RC) and 102-105 (GDGS). Asp103 serves as a coordination point for Mg(2+). 125–127 (TID) lines the substrate pocket. Asp127 functions as the Proton acceptor in the catalytic mechanism. Arg154 provides a ligand contact to ADP. Residues Arg162 and 169 to 171 (MGR) each bind substrate. Residues 185 to 187 (GAE) and 213 to 215 (KTH) each bind ADP. Residues Glu222, Arg243, and 249–252 (HIQR) contribute to the substrate site.

This sequence belongs to the phosphofructokinase type A (PFKA) family. ATP-dependent PFK group I subfamily. Prokaryotic clade 'B1' sub-subfamily. As to quaternary structure, homotetramer. Requires Mg(2+) as cofactor.

It localises to the cytoplasm. The catalysed reaction is beta-D-fructose 6-phosphate + ATP = beta-D-fructose 1,6-bisphosphate + ADP + H(+). It participates in carbohydrate degradation; glycolysis; D-glyceraldehyde 3-phosphate and glycerone phosphate from D-glucose: step 3/4. Its activity is regulated as follows. Allosterically activated by ADP and other diphosphonucleosides, and allosterically inhibited by phosphoenolpyruvate. Functionally, catalyzes the phosphorylation of D-fructose 6-phosphate to fructose 1,6-bisphosphate by ATP, the first committing step of glycolysis. This Clostridium perfringens (strain 13 / Type A) protein is ATP-dependent 6-phosphofructokinase 1.